A 420-amino-acid polypeptide reads, in one-letter code: 4-hydroxy-3-methylbut-2-en-1-yl diphosphate synthase (flavodoxin) (420 aa).

4 residues coordinate [4Fe-4S] cluster: cysteine 307, cysteine 310, cysteine 353, and glutamate 360.

Belongs to the IspG family. [4Fe-4S] cluster serves as cofactor.

It catalyses the reaction (2E)-4-hydroxy-3-methylbut-2-enyl diphosphate + oxidized [flavodoxin] + H2O + 2 H(+) = 2-C-methyl-D-erythritol 2,4-cyclic diphosphate + reduced [flavodoxin]. It functions in the pathway isoprenoid biosynthesis; isopentenyl diphosphate biosynthesis via DXP pathway; isopentenyl diphosphate from 1-deoxy-D-xylulose 5-phosphate: step 5/6. In terms of biological role, converts 2C-methyl-D-erythritol 2,4-cyclodiphosphate (ME-2,4cPP) into 1-hydroxy-2-methyl-2-(E)-butenyl 4-diphosphate. This is 4-hydroxy-3-methylbut-2-en-1-yl diphosphate synthase (flavodoxin) from Brucella suis biovar 1 (strain 1330).